We begin with the raw amino-acid sequence, 132 residues long: Small ribosomal subunit protein uS8 (132 aa).

Belongs to the universal ribosomal protein uS8 family. Part of the 30S ribosomal subunit. Contacts proteins S5 and S12.

In terms of biological role, one of the primary rRNA binding proteins, it binds directly to 16S rRNA central domain where it helps coordinate assembly of the platform of the 30S subunit. The polypeptide is Small ribosomal subunit protein uS8 (Lacticaseibacillus casei (strain BL23) (Lactobacillus casei)).